A 654-amino-acid chain; its full sequence is WD repeat-containing protein 70 (654 aa).

Disordered stretches follow at residues 1-26 and 43-175; these read MERS…VTMG and FEQT…DSHE. A compositionally biased stretch (basic and acidic residues) spans 45–78; sequence QTRRTAVERSRKTLEAREKEEEMNREKELRRQNE. The segment covering 99-111 has biased composition (low complexity); the sequence is RDTSSSESEQSSD. Acidic residues predominate over residues 147-164; sequence NEEEEEAEEEEEEEEEEE. The span at 165–175 shows a compositional bias: basic and acidic residues; it reads NPVHKIPDSHE. WD repeat units follow at residues 180 to 219, 227 to 268, 281 to 321, 330 to 369, 376 to 415, 421 to 466, and 469 to 508; these read HGTK…ASFK, CECH…ECIK, GHTA…KQKS, GKKV…HPKF, DSGT…KPLF, PTMF…RVYE, and ITDA…QRGA. A Glycyl lysine isopeptide (Lys-Gly) (interchain with G-Cter in SUMO2) cross-link involves residue lysine 296. An N6-acetyllysine modification is found at lysine 452. Positions 540-565 are enriched in basic and acidic residues; the sequence is REPRQRSTRKQLEKDRLDPLKSHKPE. The disordered stretch occupies residues 540-579; sequence REPRQRSTRKQLEKDRLDPLKSHKPEPPVAGPGRGGRVGT. Threonine 579 carries the post-translational modification Phosphothreonine. Residues lysine 590 and lysine 596 each participate in a glycyl lysine isopeptide (Lys-Gly) (interchain with G-Cter in SUMO2) cross-link. Serine 621 and serine 638 each carry phosphoserine. Residues 630-654 are disordered; the sequence is KTMFAQVESDDEEAKNEPEWKKRKI. Residues 644-654 show a composition bias toward basic and acidic residues; that stretch reads KNEPEWKKRKI.

It belongs to the WD repeat GAD-1 family.

This Homo sapiens (Human) protein is WD repeat-containing protein 70 (WDR70).